Here is a 221-residue protein sequence, read N- to C-terminus: MAIVYAVVARGTVVLAEFSAVTGNTGAVVRRILEKLSPEISDERLCFSQDRYIFHILRSDGLTFLCMANDTFGRRVPFSYLEEIHMRFMKNYGKVAHNAPAYAMNDEFSRVLHQQMEFFSSNPSVDTLNRVRGEVSEIRSVMVENIEKIMERGDRIELLVDKTATMQDSSFHFRKQSKRLRRALWMKNAKLLVLLTCLIVFLLYIIIASFCGGITLPSCRS.

Ala-2 bears the N-acetylalanine mark. Over 2 to 190 the chain is Cytoplasmic; the sequence is AIVYAVVARG…RRALWMKNAK (189 aa). The Longin domain occupies 7–112; the sequence is VVARGTVVLA…AMNDEFSRVL (106 aa). A v-SNARE coiled-coil homology domain is found at 127–187; it reads TLNRVRGEVS…KRLRRALWMK (61 aa). Residues 191 to 211 form a helical; Anchor for type IV membrane protein membrane-spanning segment; it reads LLVLLTCLIVFLLYIIIASFC. The Vesicular segment spans residues 212 to 221; sequence GGITLPSCRS.

This sequence belongs to the synaptobrevin family. As to expression, highly expressed in leaves, stems and roots. Detected in flowers.

The protein resides in the golgi apparatus membrane. Functionally, involved in the targeting and/or fusion of transport vesicles to their target membrane. The sequence is that of Vesicle-associated membrane protein 714 from Arabidopsis thaliana (Mouse-ear cress).